Here is a 748-residue protein sequence, read N- to C-terminus: Phytochrome-like protein Cph1 (748 aa).

The PAS domain occupies 19–86; the sequence is AIHTAHLIQP…IQSRLTAGQI (68 aa). Residues 87 to 510 are chromophore binding domain; the sequence is SSLNPSKLWA…KKAIVNLILR (424 aa). Residues 152–320 form the GAF domain; it reads NLRDFYDVIV…VVFSNISAQE (169 aa). Residue cysteine 259 coordinates a tetrapyrrole. A Histidine kinase domain is found at 535-748; that stretch reads IASHDLQEPL…TFYFSIPIGN (214 aa). Histidine 538 is subject to Phosphohistidine; by autocatalysis.

In the N-terminal section; belongs to the phytochrome family. Homodimer. Contains one covalently linked tetrapyrrole chromophore.

It catalyses the reaction ATP + protein L-histidine = ADP + protein N-phospho-L-histidine.. Its function is as follows. Regulatory photoreceptor which exists in two forms that are reversibly interconvertible by light: the R form that absorbs maximally in the red region of the spectrum and the FR form that absorbs maximally in the far-red region. Also has a slight blue shift for the far-red maximum. Forms a two-component system with the Rrcp1 response regulator. This Synechocystis sp. (strain ATCC 27184 / PCC 6803 / Kazusa) protein is Phytochrome-like protein Cph1 (cph1).